A 584-amino-acid chain; its full sequence is tRNA-guanine(15) transglycosylase (584 aa).

The active-site Nucleophile is the Asp-95. Substrate-binding residues include Asp-130 and Gly-196. Zn(2+) is bound by residues Cys-279, Cys-281, and Cys-284. One can recognise a PUA domain in the interval 507–582 (RMRVVVSEEA…RAVKVRRGIS (76 aa)).

Belongs to the archaeosine tRNA-ribosyltransferase family. Zn(2+) is required as a cofactor.

It catalyses the reaction guanosine(15) in tRNA + 7-cyano-7-deazaguanine = 7-cyano-7-carbaguanosine(15) in tRNA + guanine. It functions in the pathway tRNA modification; archaeosine-tRNA biosynthesis. In terms of biological role, exchanges the guanine residue with 7-cyano-7-deazaguanine (preQ0) at position 15 in the dihydrouridine loop (D-loop) of archaeal tRNAs. This is tRNA-guanine(15) transglycosylase from Pyrococcus abyssi (strain GE5 / Orsay).